The following is a 539-amino-acid chain: Tetracenomycin B2 monooxygenase-dioxygenase (539 aa).

4 residues coordinate FAD: Leu-15, Glu-35, Gln-128, and Leu-152. Tyr-231 serves as the catalytic Proton acceptor. Asp-313 is a binding site for FAD.

This sequence belongs to the PheA/TfdB FAD monooxygenase family. Requires FAD as cofactor.

It catalyses the reaction tetracenomycin B2 + 2 NADPH + 2 O2 + 2 H(+) = 8-demethyltetracenomycin C + 2 NADP(+) + H2O. It carries out the reaction tetracenomycin A2 + 2 NADPH + 2 O2 + 2 H(+) = tetracenomycin C + 2 NADP(+) + H2O. It participates in antibiotic biosynthesis. In terms of biological role, involved in the biosynthesis of elloramycin, an antitumor polyketide. In vivo, probably catalyzes the triple hydroxylation of 8-demethyltetracenomycin A2 (tetracenomycin B2) at positions C-4, C-4a and C-12a to give 8-demethyltetracenomycin C (8-DMTC). In vitro, catalyzes the triple hydroxylation of tetracenomycin A2 (TCM A2) to give tetracenomycin C (TCM C). Uses NADPH as an electron donor and requires molecular O(2). The chain is Tetracenomycin B2 monooxygenase-dioxygenase from Streptomyces olivaceus.